Here is a 256-residue protein sequence, read N- to C-terminus: Probable elongation factor 1-delta (256 aa).

Ser37, Ser53, and Ser89 each carry phosphoserine. Residues 110-146 (NGVSKEPEVEAKKPEANDDDDDVDLFGSDSEEEDGEA) are disordered. Basic and acidic residues predominate over residues 114-125 (KEPEVEAKKPEA). Residues 126 to 144 (NDDDDDVDLFGSDSEEEDG) are compositionally biased toward acidic residues. A phosphoserine mark is found at Ser137 and Ser139.

Belongs to the EF-1-beta/EF-1-delta family. In terms of assembly, EF-1 is composed of 4 subunits: alpha, beta, delta, and gamma.

In terms of biological role, EF-1-beta and EF-1-delta stimulate the exchange of GDP bound to EF-1-alpha to GTP. In Drosophila melanogaster (Fruit fly), this protein is Probable elongation factor 1-delta (eEF1delta).